The following is a 525-amino-acid chain: EGF domain-specific O-linked N-acetylglucosamine transferase (525 aa).

An N-terminal signal peptide occupies residues 1-24 (MVPLRLVLLLHIIHFSCENEVGSA). Residues 293–295 (DYE) carry the Required for optimal activity motif. Residue Asn-352 is glycosylated (N-linked (GlcNAc...) asparagine). Residues 522–525 (RDEL) carry the Prevents secretion from ER motif.

Belongs to the glycosyltransferase 61 family.

It is found in the endoplasmic reticulum lumen. It catalyses the reaction L-seryl-[protein] + UDP-N-acetyl-alpha-D-glucosamine = 3-O-(N-acetyl-beta-D-glucosaminyl)-L-seryl-[protein] + UDP + H(+). The catalysed reaction is L-threonyl-[protein] + UDP-N-acetyl-alpha-D-glucosamine = 3-O-(N-acetyl-beta-D-glucosaminyl)-L-threonyl-[protein] + UDP + H(+). Catalyzes the transfer of a single N-acetylglucosamine from UDP-GlcNAc to a serine or threonine residue in extracellular proteins resulting in their modification with a beta-linked N-acetylglucosamine (O-GlcNAc). Specifically glycosylates the Thr residue located between the fifth and sixth conserved cysteines of folded EGF-like domains. This chain is EGF domain-specific O-linked N-acetylglucosamine transferase (eogt), found in Xenopus laevis (African clawed frog).